The chain runs to 112 residues: Nitrogenase-stabilizing/protective protein NifW (112 aa).

This sequence belongs to the NifW family. As to quaternary structure, homotrimer; associates with NifD.

May protect the nitrogenase Fe-Mo protein from oxidative damage. The sequence is that of Nitrogenase-stabilizing/protective protein NifW from Paraburkholderia xenovorans (strain LB400).